A 520-amino-acid chain; its full sequence is MASVSAIGVLKVPPASTSNSTGKATEAVPTRTLSFSSSVTSSDDKISLKSTVSRLCKSVVRRNPIIVSPKAVSDSQNSQTCLDPDASSSVLGIILGGGAGTRLYPLTKKRAKPAVPLGANYRLIDIPVSNCLNSNISKIYVLTQFNSASLNRHLSRAYASNMGGYKNEGFVEVLAAQQSPENPNWFQGTADAVRQYLWLFEEHNVLEYLILAGDHLYRMDYEKFIQAHRETDADITVAALPMDEQRATAFGLMKIDEEGRIIEFAEKPKGEHLKAMKVDTTILGLDDQRAKEMPFIASMGIYVVSRDVMLDLLRNQFPGANDFGSEVIPGATSLGLRVQAYLYDGYWEDIGTIEAFYNANLGITKKPVPDFSFYDRSAPIYTQPRYLPPSKMLDADVTDSVIGEGCVIKNCKIHHSVVGLRSCISEGAIIEDSLLMGADYYETATEKSLLSAKGSVPIGIGKNSHIKRAIIDKNARIGDNVKIINSDNVQEAARETDGYFIKSGIVTVIKDALIPTGTVI.

Residues 1–71 (MASVSAIGVL…RNPIIVSPKA (71 aa)) constitute a chloroplast transit peptide.

Belongs to the bacterial/plant glucose-1-phosphate adenylyltransferase family. As to quaternary structure, heterotetramer. As to expression, leaves.

It is found in the plastid. The protein localises to the chloroplast. The catalysed reaction is alpha-D-glucose 1-phosphate + ATP + H(+) = ADP-alpha-D-glucose + diphosphate. It functions in the pathway glycan biosynthesis; starch biosynthesis. With respect to regulation, activated by 3'phosphoglycerate, inhibited by orthophosphate. Allosteric regulation. This protein plays a role in synthesis of starch. It catalyzes the synthesis of the activated glycosyl donor, ADP-glucose from Glc-1-P and ATP. This is Glucose-1-phosphate adenylyltransferase small subunit, chloroplastic (APS1) from Arabidopsis thaliana (Mouse-ear cress).